A 146-amino-acid polypeptide reads, in one-letter code: Hemoglobin subunit beta (146 aa).

The Globin domain occupies 2 to 146 (HWTETERATI…VVAALSREYH (145 aa)). Residues His-63 and His-92 each coordinate heme b.

This sequence belongs to the globin family. As to quaternary structure, heterotetramer of two alpha chains and two beta chains (an easy dimerization is also reported). As to expression, red blood cells.

In terms of biological role, involved in oxygen transport from the lung to the various peripheral tissues. The sequence is that of Hemoglobin subunit beta (HBB) from Latimeria chalumnae (Coelacanth).